A 78-amino-acid polypeptide reads, in one-letter code: D-alanyl carrier protein (78 aa).

The 78-residue stretch at 1-78 (MEFKQEVLDV…NIVNKLTELK (78 aa)) folds into the Carrier domain. Position 36 is an O-(pantetheine 4'-phosphoryl)serine (Ser36).

It belongs to the DltC family. Post-translationally, 4'-phosphopantetheine is transferred from CoA to a specific serine of apo-DCP.

It is found in the cytoplasm. It participates in cell wall biogenesis; lipoteichoic acid biosynthesis. Carrier protein involved in the D-alanylation of lipoteichoic acid (LTA). The loading of thioester-linked D-alanine onto DltC is catalyzed by D-alanine--D-alanyl carrier protein ligase DltA. The DltC-carried D-alanyl group is further transferred to cell membrane phosphatidylglycerol (PG) by forming an ester bond, probably catalyzed by DltD. D-alanylation of LTA plays an important role in modulating the properties of the cell wall in Gram-positive bacteria, influencing the net charge of the cell wall. The protein is D-alanyl carrier protein of Bacillus velezensis (strain DSM 23117 / BGSC 10A6 / LMG 26770 / FZB42) (Bacillus amyloliquefaciens subsp. plantarum).